The primary structure comprises 463 residues: Chromosomal replication initiator protein DnaA (463 aa).

The interval 1 to 83 (MNTNQIILTD…LQLFQHYNNT (83 aa)) is domain I, interacts with DnaA modulators. Residues 83-124 (TIKSIDIITKELPGTTQTVIELPTKTFADIGSSELNSENIFS) are domain II. Residues 125 to 343 (TLDVRFTFDN…GALNKVIAHS (219 aa)) are domain III, AAA+ region. Residues G171, G173, K174, and T175 each coordinate ATP. The interval 344 to 463 (NFTLKEITLE…INLLMKILQH (120 aa)) is domain IV, binds dsDNA.

It belongs to the DnaA family. Oligomerizes as a right-handed, spiral filament on DNA at oriC.

The protein localises to the cytoplasm. Its function is as follows. Plays an essential role in the initiation and regulation of chromosomal replication. ATP-DnaA binds to the origin of replication (oriC) to initiate formation of the DNA replication initiation complex once per cell cycle. Binds the DnaA box (a 9 base pair repeat at the origin) and separates the double-stranded (ds)DNA. Forms a right-handed helical filament on oriC DNA; dsDNA binds to the exterior of the filament while single-stranded (ss)DNA is stabiized in the filament's interior. The ATP-DnaA-oriC complex binds and stabilizes one strand of the AT-rich DNA unwinding element (DUE), permitting loading of DNA polymerase. After initiation quickly degrades to an ADP-DnaA complex that is not apt for DNA replication. Binds acidic phospholipids. The protein is Chromosomal replication initiator protein DnaA of Rickettsia akari (strain Hartford).